Reading from the N-terminus, the 1297-residue chain is Regulator of V-ATPase in vacuolar membrane protein 1 (1297 aa).

Basic and acidic residues-rich tracts occupy residues 1161-1171 (DQEIHENKDSQ) and 1260-1269 (AVEKTHDSPK). Disordered stretches follow at residues 1161–1182 (DQEI…VRNK) and 1260–1297 (AVEK…FSFE).

In terms of assembly, component of the RAVE complex composed of rav1, rav2 and skp1. Interacts with vam2.

The protein localises to the cytoplasm. It localises to the nucleus. It is found in the endomembrane system. In terms of biological role, component of the RAVE complex which is required for stable assembly of the vacuolar ATPase complex V-ATPase. This is Regulator of V-ATPase in vacuolar membrane protein 1 (rav1) from Schizosaccharomyces pombe (strain 972 / ATCC 24843) (Fission yeast).